We begin with the raw amino-acid sequence, 123 residues long: SOSS complex subunit C homolog (123 aa).

It belongs to the SOSS-C family.

In Drosophila ananassae (Fruit fly), this protein is SOSS complex subunit C homolog.